The primary structure comprises 215 residues: Vesicle-trafficking protein SEC22b (215 aa).

Residues 1-190 lie on the Cytoplasmic side of the membrane; sequence MVLLTMIARV…RQDAKYLNMR (190 aa). Residues 6 to 119 form the Longin domain; the sequence is MIARVADGLP…YSFIEFDNYI (114 aa). Residues 134 to 194 enclose the v-SNARE coiled-coil homology domain; sequence NLSSVNTELQ…KYLNMRSTYA (61 aa). The chain crosses the membrane as a helical span at residues 191 to 213; sequence STYAKLAAVAVFSVMLIVYIRFW. Residues 214–215 are Lumenal-facing; it reads WL.

This sequence belongs to the synaptobrevin family. As to quaternary structure, component of 2 distinct SNARE complexes.

It localises to the endoplasmic reticulum membrane. It is found in the endoplasmic reticulum-Golgi intermediate compartment membrane. The protein resides in the golgi apparatus. Its subcellular location is the cis-Golgi network membrane. The protein localises to the trans-Golgi network membrane. It localises to the melanosome. Its function is as follows. SNARE involved in targeting and fusion of ER-derived transport vesicles with the Golgi complex as well as Golgi-derived retrograde transport vesicles with the ER. This is Vesicle-trafficking protein SEC22b from Xenopus tropicalis (Western clawed frog).